The primary structure comprises 682 residues: Potassium-transporting ATPase ATP-binding subunit (682 aa).

The next 4 helical transmembrane spans lie at 34–54 (PVMF…LAMV), 58–78 (IAGS…TVLF), 219–239 (IALT…TATL), and 254–274 (VLVA…LSAI). Catalysis depends on Asp307, which acts as the 4-aspartylphosphate intermediate. Residues Asp344, Glu348, 377–384 (FTAQSRMS), and Lys395 contribute to the ATP site. 2 residues coordinate Mg(2+): Asp518 and Asp522. 3 helical membrane-spanning segments follow: residues 588–608 (FAII…LNVM), 616–636 (AILS…PLAL), and 662–682 (LLVP…LGLA).

This sequence belongs to the cation transport ATPase (P-type) (TC 3.A.3) family. Type IA subfamily. As to quaternary structure, the system is composed of three essential subunits: KdpA, KdpB and KdpC.

Its subcellular location is the cell inner membrane. It catalyses the reaction K(+)(out) + ATP + H2O = K(+)(in) + ADP + phosphate + H(+). In terms of biological role, part of the high-affinity ATP-driven potassium transport (or Kdp) system, which catalyzes the hydrolysis of ATP coupled with the electrogenic transport of potassium into the cytoplasm. This subunit is responsible for energy coupling to the transport system and for the release of the potassium ions to the cytoplasm. The polypeptide is Potassium-transporting ATPase ATP-binding subunit (Salmonella dublin (strain CT_02021853)).